A 505-amino-acid polypeptide reads, in one-letter code: Lysine--tRNA ligase (505 aa).

Over residues 1–11 the composition is skewed to polar residues; sequence MSDQQLDQPSL. A disordered region spans residues 1–23; the sequence is MSDQQLDQPSLSHEERQHEENKL. The segment covering 12–23 has biased composition (basic and acidic residues); the sequence is SHEERQHEENKL. Residues E415 and E422 each contribute to the Mg(2+) site.

It belongs to the class-II aminoacyl-tRNA synthetase family. Homodimer. Mg(2+) serves as cofactor.

The protein resides in the cytoplasm. It carries out the reaction tRNA(Lys) + L-lysine + ATP = L-lysyl-tRNA(Lys) + AMP + diphosphate. The chain is Lysine--tRNA ligase from Ectopseudomonas mendocina (strain ymp) (Pseudomonas mendocina).